Consider the following 392-residue polypeptide: GTPase Obg (392 aa).

The 159-residue stretch at 1-159 (MKFVDEATIL…RDLQLELMLL (159 aa)) folds into the Obg domain. The interval 127-146 (NTRFKSSVNRTPRQKTMGTP) is disordered. Residues 129–143 (RFKSSVNRTPRQKTM) show a composition bias toward polar residues. Positions 160–333 (ADVGMLGLPN…LCWDVMAFIK (174 aa)) constitute an OBG-type G domain. GTP is bound by residues 166 to 173 (GLPNAGKS), 191 to 195 (FTTLV), 213 to 216 (DIPG), 283 to 286 (NKVD), and 314 to 316 (SAA). Positions 173 and 193 each coordinate Mg(2+). The segment at 360 to 392 (QLEEAQPEVEEDDDWDDDWDEDDEEGVETIYQR) is disordered. Residues 364–386 (AQPEVEEDDDWDDDWDEDDEEGV) show a composition bias toward acidic residues.

The protein belongs to the TRAFAC class OBG-HflX-like GTPase superfamily. OBG GTPase family. Monomer. Mg(2+) is required as a cofactor.

It localises to the cytoplasm. In terms of biological role, an essential GTPase which binds GTP, GDP and possibly (p)ppGpp with moderate affinity, with high nucleotide exchange rates and a fairly low GTP hydrolysis rate. Plays a role in control of the cell cycle, stress response, ribosome biogenesis and in those bacteria that undergo differentiation, in morphogenesis control. The polypeptide is GTPase Obg (Erwinia tasmaniensis (strain DSM 17950 / CFBP 7177 / CIP 109463 / NCPPB 4357 / Et1/99)).